We begin with the raw amino-acid sequence, 592 residues long: A-type ATP synthase subunit A (592 aa).

234 to 241 (GPFGSGKT) is an ATP binding site.

Belongs to the ATPase alpha/beta chains family. In terms of assembly, has multiple subunits with at least A(3), B(3), C, D, E, F, H, I and proteolipid K(x).

Its subcellular location is the cell membrane. It catalyses the reaction ATP + H2O + 4 H(+)(in) = ADP + phosphate + 5 H(+)(out). Produces ATP from ADP in the presence of a proton gradient across the membrane. The archaeal alpha chain is a catalytic subunit. Functionally, component of the A-type ATP synthase that produces ATP from ADP in the presence of a proton gradient across the membrane. The A chain is the catalytic subunit. The sequence is that of A-type ATP synthase subunit A from Sulfolobus acidocaldarius (strain ATCC 33909 / DSM 639 / JCM 8929 / NBRC 15157 / NCIMB 11770).